A 179-amino-acid chain; its full sequence is Shikimate kinase (179 aa).

Residue 12–17 (GVGKSK) participates in ATP binding. Mg(2+) is bound at residue serine 16. The substrate site is built by aspartate 34, arginine 61, and glycine 83. Arginine 131 is an ATP binding site. Position 147 (arginine 147) interacts with substrate.

It belongs to the shikimate kinase family. Monomer. It depends on Mg(2+) as a cofactor.

The protein localises to the cytoplasm. It catalyses the reaction shikimate + ATP = 3-phosphoshikimate + ADP + H(+). It participates in metabolic intermediate biosynthesis; chorismate biosynthesis; chorismate from D-erythrose 4-phosphate and phosphoenolpyruvate: step 5/7. In terms of biological role, catalyzes the specific phosphorylation of the 3-hydroxyl group of shikimic acid using ATP as a cosubstrate. In Leptospira borgpetersenii serovar Hardjo-bovis (strain JB197), this protein is Shikimate kinase.